A 2139-amino-acid polypeptide reads, in one-letter code: MADVTARSLQYEYKANSNLVLQADRSLIDRTRRDEPTGEVLSLVGKLEGTRMGDKAQRTKPQMQEERRAKRRKRDEDRHDINKMKGYTLLSEGIDEMVGIIYKPKTKETRETYEVLLSFIQAALGDQPRDILCGAADEVLAVLKNEKLRDKERRREIDLLLGQTDDTRYHVLVNLGKKITDYGGDKEIQNMDDNIDETYGVNVQFESDEEEGDEDVYGEVREEASDDDMEGDEAVVRCTLSANLVASGELMSSKKKDLHPRDIDAFWLQRQLSRFYDDAIVSQKKADEVLEILKTASDDRECENQLVLLLGFNTFDFIKVLRQHRMMILYCTLLASAQSEAEKERIMGKMEADPELSKFLYQLHETEKEDLIREERSRRERVRQSRMDTDLETMDLDQGGEALAPRQVLDLEDLVFTQGSHFMANKRCQLPDGSFRRQRKGYEEVHVPALKPKPFGSEEQLLPVEKLPKYAQAGFEGFKTLNRIQSKLYRAALETDENLLLCAPTGAGKTNVALMCMLREIGKHINMDGTINVDDFKIIYIAPMRSLVQEMVGSFGKRLATYGITVAELTGDHQLCKEEISATQIIVCTPEKWDIITRKGGERTYTQLVRLIVLDEIHLLHDDRGPVLEALVARAIRNIEMTQEDVRLIGLSATLPNYEDVATFLRVDPAKGLFYFDNSFRPVPLEQTYVGITEKKAIKRFQIMNEIVYEKIMEHAGKNQVLVFVHSRKETGKTARAIRDMCLEKDTLGLFLREGSASTEVLRTEAEQCKNLELKDLLPYGFAIHHAGMTRVDRTLVEDLFADKHIQVLVSTATLAWGVNLPAHTVIIKGTQVYSPEKGRWTELGALDILQMLGRAGRPQYDTKGEGILITSHGELQYYLSLLNQQLPIESQMVSKLPDMLNAEIVLGNVQNAKDAVNWLGYAYLYIRMLRSPTLYGISHDDLKGDPLLDQRRLDLVHTAALMLDKNNLVKYDKKTGNFQVTELGRIASHYYITNDTVQTYNQLLKPTLSEIELFRVFSLSSEFKNITVREEEKLELQKLLERVPIPVKESIEEPSAKINVLLQAFISQLKLEGFALMADMVYVTQSAGRLMRAIFEIVLNRGWAQLTDKTLNLCKMIDKRMWQSMCPLRQFRKLPEEVVKKIEKKNFPFERLYDLNHNEIGELIRMPKMGKTIHKYVHLFPKLELSVHLQPITRSTLKVELTITPDFQWDEKARLVHGSSEAFWILVEDVDSEVILHHEYFLLKAKYAQDEHLITFFVPVFEPLPPQYFIRVVSDRWLSCETQLPVSFRHLILPEKYPPPTELLDLQPLPVSALRNSAFESLYQDKFPFFNPIQTQVFNTVYNSDDNVFVGAPTGSGKTICAEFAILRMLLQNSEGRCVYITPMEALAEQVYMDWYEKFQDRLNKKVVLLTGETSTDLKLLGKGNIIISTPEKWDILSRRWKQRKNVQNINLFVVDEVHLIGGENGPVLEVICSRMRYISSQIERPIRIVALSSSLSNAKDVAHWLGCSATSTFNFHPNVRPVPLELHIQGFNISHTQTRLLSMAKPVYHAITKHSPKKPVIVFVPSRKQTRLTAIDILTTCAADIQRQRFLHCTEKDLIPYLEKLSDSTLKETLLNGVGYLHEGLSPMERRLVEQLFSSGAIQVVVASRSLCWGMNVAAHLVIIMDTQYYNGKIHAYVDYPIYDVLQMVGHANRPLQDDEGRCVIMCQGSKKDFFKKFLYEPLPVESHLDHCMHDHFNAEIVTKTIENKQDAVDYLTWTFLYRRMTQNPNYYNLQGISHRHLSDHLSELVEQTLSDLEQSKCISIEDEMDVAPLNLGMIAAYYYINYTTIELFSMSLNAKTKVRGLIEIISNAAEYENIPIRHHEDNLLRQLAQKVPHKLNNPKFNDPHVKTNLLLQAHLSRMQLSAELQSDTEEILSKAIRLIQACVDVLSSNGWLSPALAAMELAQMVTQAMWSKDSYLKQLPHFTSEHIKRCTDKGVESVFDIMEMEDEERNALLQLTDSQIADVARFCNRYPNIELSYEVVDKDSIRSGGPVVVLVQLEREEEVTGPVIAPLFPQKREEGWWVVIGDAKSNSLISIKRLTLQQKAKVKLDFVAPATGGHNYTLYFMSDAYMGCDQEYKFSVDVKEAETDSDSD.

Ser-17 and Ser-26 each carry phosphoserine. Positions Glu-39 to Asp-80 are disordered. A Glycyl lysine isopeptide (Lys-Gly) (interchain with G-Cter in SUMO2) cross-link involves residue Lys-46. The segment covering Glu-48–Asp-80 has biased composition (basic and acidic residues). Residues Asp-54–Met-84 are a coiled coil. A Phosphoserine modification is found at Ser-225. A Phosphothreonine modification is found at Thr-389. An interaction with C9orf78 and WBP4 region spans residues Asp-395–Ala-2132. Residues Arg-490–Leu-673 enclose the Helicase ATP-binding 1 domain. Ala-503 to Thr-510 is a binding site for ATP. A DEAH box motif is present at residues Asp-615–His-618. Positions Pro-684–Gly-921 constitute a Helicase C-terminal 1 domain. Tyr-709 is subject to Phosphotyrosine. Lys-944 is covalently cross-linked (Glycyl lysine isopeptide (Lys-Gly) (interchain with G-Cter in SUMO)). Lys-971 carries the post-translational modification N6-acetyllysine; alternate. Lys-971 participates in a covalent cross-link: Glycyl lysine isopeptide (Lys-Gly) (interchain with G-Cter in SUMO); alternate. One can recognise an SEC63 1 domain in the interval Thr-982 to Phe-1289. Residues Lys-1071 and Lys-1199 each participate in a glycyl lysine isopeptide (Lys-Gly) (interchain with G-Cter in SUMO) cross-link. The interaction with TSSC4 stretch occupies residues Leu-1285–Asp-2139. Positions Asn-1340–Phe-1515 constitute a Helicase ATP-binding 2 domain. Ala-1353–Thr-1360 is a binding site for ATP. The residue at position 1431 (Thr-1431) is a Phosphothreonine. The short motif at Asp-1457–His-1460 is the DEAH box element. The region spanning Pro-1548–Asp-1756 is the Helicase C-terminal 2 domain. A Phosphothreonine modification is found at Thr-1768. Residues Pro-1815–Val-2127 form the SEC63 2 domain. Ser-2005 carries the post-translational modification Phosphoserine. Lys-2094 is covalently cross-linked (Glycyl lysine isopeptide (Lys-Gly) (interchain with G-Cter in SUMO)). Thr-2134 is modified (phosphothreonine). A phosphoserine mark is found at Ser-2136 and Ser-2138.

It belongs to the helicase family. SKI2 subfamily. Component of a core complex containing at least PRPF8, SNRNP200, EFTUD2 and SNRNP40. Component of the U5 snRNP and U4/U6-U5 tri-snRNP complexes, building blocks of the spliceosome. Component of the U4/U6-U5 tri-snRNP complex composed of the U4, U6 and U5 snRNAs and at least PRPF3, PRPF4, PRPF6, PRPF8, PRPF31, SNRNP200, TXNL4A, SNRNP40, DDX23, CD2BP2, PPIH, SNU13, EFTUD2, SART1 and USP39. Component of precatalytic, catalytic and postcatalytic spliceosomal complexes. Component of the minor spliceosome, which splices U12-type introns. Interacts with C9orf78; the interaction is direct and mutually exclusive with its interaction with WBP4. Interacts with WBP4; the interaction is mutually exclusive with its interaction with C9orf78. Interacts with PRPF8. Interacts with TSSC4; the interaction is direct, excludes recruitment of C9ORF78 and WBP4 to SNRNP200 and negatively regulates its RNA helicase activity.

It localises to the nucleus. The enzyme catalyses ATP + H2O = ADP + phosphate + H(+). Catalyzes the ATP-dependent unwinding of U4/U6 RNA duplices, an essential step in the assembly of a catalytically active spliceosome. Plays a role in pre-mRNA splicing as core component of precatalytic, catalytic and postcatalytic spliceosomal complexes. As a component of the minor spliceosome, involved in the splicing of U12-type introns in pre-mRNAs. Involved in spliceosome assembly, activation and disassembly. Mediates changes in the dynamic network of RNA-RNA interactions in the spliceosome. The protein is U5 small nuclear ribonucleoprotein 200 kDa helicase (Snrnp200) of Rattus norvegicus (Rat).